Here is a 546-residue protein sequence, read N- to C-terminus: Chaperonin GroEL (546 aa).

ATP-binding positions include T30 to P33, K51, D87 to T91, G415, and D495.

The protein belongs to the chaperonin (HSP60) family. As to quaternary structure, forms a cylinder of 14 subunits composed of two heptameric rings stacked back-to-back. Interacts with the co-chaperonin GroES.

The protein resides in the cytoplasm. The enzyme catalyses ATP + H2O + a folded polypeptide = ADP + phosphate + an unfolded polypeptide.. Its function is as follows. Together with its co-chaperonin GroES, plays an essential role in assisting protein folding. The GroEL-GroES system forms a nano-cage that allows encapsulation of the non-native substrate proteins and provides a physical environment optimized to promote and accelerate protein folding. This chain is Chaperonin GroEL, found in Brucella ovis (strain ATCC 25840 / 63/290 / NCTC 10512).